A 386-amino-acid polypeptide reads, in one-letter code: Heat-inducible transcription repressor HrcA (386 aa).

It belongs to the HrcA family.

Negative regulator of class I heat shock genes (grpE-dnaK-dnaJ and groELS operons). Prevents heat-shock induction of these operons. The chain is Heat-inducible transcription repressor HrcA from Chlamydia felis (strain Fe/C-56) (Chlamydophila felis).